The chain runs to 456 residues: Dothistromin biosynthesis regulatory protein aflJ (456 aa).

An HTH iclR-type domain is found at 74–143 (LARENQLLAC…PKPGYVAHSG (70 aa)). The H-T-H motif DNA-binding region spans 104-123 (YSDVADLACVPVDQLRRIAR). Residues 290–300 (KLHNGLSTPPE) show a composition bias toward polar residues. Positions 290–314 (KLHNGLSTPPESDTGPAARAAKASE) are disordered.

Its subcellular location is the nucleus. Functionally, transcription coactivator involved in regulation of the dothistromin biosynthesis gene cluster with aflR. This Dothistroma septosporum (strain NZE10 / CBS 128990) (Red band needle blight fungus) protein is Dothistromin biosynthesis regulatory protein aflJ.